Consider the following 87-residue polypeptide: MANIKSAKKRIKVTEKKTLRNKMIKSALKTAIKKFEVAVEANNKAEAATLYVEAARALDMSASKGVVHKNMAARKKSRLAAKLNAMA.

The protein belongs to the bacterial ribosomal protein bS20 family.

In terms of biological role, binds directly to 16S ribosomal RNA. In Clostridium perfringens (strain ATCC 13124 / DSM 756 / JCM 1290 / NCIMB 6125 / NCTC 8237 / Type A), this protein is Small ribosomal subunit protein bS20.